Consider the following 292-residue polypeptide: GID complex substrate-recognition subunit 10 (292 aa).

It belongs to the GID4/VID24 family. In terms of assembly, substrate-recognition component of the GID/CTLH ubiquitin ligase complex. In the absence of stress, the complex exists as an inactive anticipatory complex (GID(Ant)), composed of VID30/GID1, the E3 ubiquitin-ligase RMD5/GID2, VID28/GID5, GID8, and the RING-like subunit FYV10/GID9, awaiting a substrate receptor to form the active E3 ligase complex. When cells are shifted to glucose-containing medium, the substrate receptor VID24/GID4 is induced and becomes part of the complex, named GID(SR4). Under osmotic or heat stress, the substrate receptor GID10 is induced and becomes part of the complex, named GID(SR10). Interacts with proteins that have an N-terminal Pro/N-degron, including ART2.

Its function is as follows. Substrate-recognition component of the GID E3 ligase complex recruiting N termini and catalyzing ubiquitination of proteins targeted for degradation. GID E3 is regulated through assembly with interchangeable N-degron-binding substrate receptors induced by distinct environmental perturbations. Required for the adaptation to osmotic or heat stress. Required for the regulation of protein levels of the adapter protein ART2, a component of the ART-Rsp5 ubiquitin ligase pathway, part of the plasma membrane quality control. Specific for substrates with an N-terminal Pro (Pro/N-degron), including ART2. Has high affinity for the N-terminal sequence Pro-Tyr-Ile-Thr, and also recognizes nonproline residues such as Met-Tyr-Ile-Thr-Val or Val-Cys-Phe-His. The sequence is that of GID complex substrate-recognition subunit 10 from Saccharomyces cerevisiae (strain ATCC 204508 / S288c) (Baker's yeast).